A 336-amino-acid polypeptide reads, in one-letter code: Mitochondrial thiamine pyrophosphate carrier 1 (336 aa).

3 Solcar repeats span residues 11 to 98, 112 to 202, and 221 to 323; these read ISST…VNQV, SSGA…VKDS, and TKGW…SLSI. The next 6 helical transmembrane spans lie at 17–37, 66–86, 118–138, 177–197, 228–244, and 298–315; these read MLCG…LDVV, GVTA…FYGA, FIAG…FDLF, GVSS…ASYG, TAGL…VFPL, and GFLV…ITMY.

This sequence belongs to the mitochondrial carrier (TC 2.A.29) family.

The protein resides in the mitochondrion inner membrane. Its function is as follows. Mitochondrial transporter that mediates uptake of thiamine pyrophosphate (ThPP) into mitochondria. The chain is Mitochondrial thiamine pyrophosphate carrier 1 (TPC1) from Yarrowia lipolytica (strain CLIB 122 / E 150) (Yeast).